The chain runs to 358 residues: Acid phosphatase (358 aa).

The N-terminal stretch at 1–17 (MKFSTIALPLLASAALA) is a signal peptide. Residues Asn20, Asn27, and Asn32 are each glycosylated (N-linked (GlcNAc...) asparagine). The interval 21–41 (SSHSGTNATSHNSTVPNENSK) is disordered. Positions 49, 50, and 81 each coordinate Mg(2+). Asn92 and Asn145 each carry an N-linked (GlcNAc...) asparagine glycan. Asn156 is a Mg(2+) binding site. Residue Ser189 is part of the active site. Residues Asn199 and Asn278 are each glycosylated (N-linked (GlcNAc...) asparagine).

This sequence belongs to the SurE nucleotidase family. Mg(2+) is required as a cofactor.

The protein resides in the secreted. The catalysed reaction is a phosphate monoester + H2O = an alcohol + phosphate. Probably serves to scavenge phosphorus for growing cells. The protein is Acid phosphatase (PHO2) of Yarrowia lipolytica (strain CLIB 122 / E 150) (Yeast).